A 968-amino-acid polypeptide reads, in one-letter code: RNA polymerase-associated protein RapA (968 aa).

One can recognise a Helicase ATP-binding domain in the interval Asp-164–Asn-334. Asp-177–Thr-184 serves as a coordination point for ATP. The short motif at Asp-280–His-283 is the DEAH box element. The region spanning Arg-490–Gly-662 is the Helicase C-terminal domain.

This sequence belongs to the SNF2/RAD54 helicase family. RapA subfamily. Interacts with the RNAP. Has a higher affinity for the core RNAP than for the holoenzyme. Its ATPase activity is stimulated by binding to RNAP.

Its function is as follows. Transcription regulator that activates transcription by stimulating RNA polymerase (RNAP) recycling in case of stress conditions such as supercoiled DNA or high salt concentrations. Probably acts by releasing the RNAP, when it is trapped or immobilized on tightly supercoiled DNA. Does not activate transcription on linear DNA. Probably not involved in DNA repair. This chain is RNA polymerase-associated protein RapA, found in Shigella boydii serotype 18 (strain CDC 3083-94 / BS512).